The chain runs to 395 residues: Protein-arginine rhamnosyltransferase (395 aa).

Residues 19–22 (NYGD), tyrosine 205, glutamine 272, and 288–292 (RGEDS) each bind dTDP-beta-L-rhamnose. Aspartate 22 (proton acceptor) is an active-site residue. The active site involves glutamate 290.

The protein belongs to the glycosyltransferase 104 family.

The catalysed reaction is dTDP-beta-L-rhamnose + L-arginyl-[protein] = N(omega)-(alpha-L-rhamnosyl)-L-arginyl-[protein] + dTDP + H(+). Protein-arginine rhamnosyltransferase that catalyzes the transfer of a single rhamnose to elongation factor P (EF-P) on 'Lys-32', a modification required for EF-P-dependent rescue of polyproline stalled ribosomes. The sequence is that of Protein-arginine rhamnosyltransferase from Shewanella oneidensis (strain ATCC 700550 / JCM 31522 / CIP 106686 / LMG 19005 / NCIMB 14063 / MR-1).